A 371-amino-acid polypeptide reads, in one-letter code: Putative 8-amino-7-oxononanoate synthase (371 aa).

Arg21 contacts substrate. 108-109 (GY) contributes to the pyridoxal 5'-phosphate binding site. Residue His133 participates in substrate binding. Residues Ser180, 205–208 (DDAH), and 234–237 (TLSK) contribute to the pyridoxal 5'-phosphate site. At Lys237 the chain carries N6-(pyridoxal phosphate)lysine. Thr333 contributes to the substrate binding site.

It belongs to the class-II pyridoxal-phosphate-dependent aminotransferase family. BioF subfamily. In terms of assembly, homodimer. Pyridoxal 5'-phosphate is required as a cofactor.

It carries out the reaction 6-carboxyhexanoyl-[ACP] + L-alanine + H(+) = (8S)-8-amino-7-oxononanoate + holo-[ACP] + CO2. The protein operates within cofactor biosynthesis; biotin biosynthesis. In terms of biological role, catalyzes the decarboxylative condensation of pimeloyl-[acyl-carrier protein] and L-alanine to produce 8-amino-7-oxononanoate (AON), [acyl-carrier protein], and carbon dioxide. The sequence is that of Putative 8-amino-7-oxononanoate synthase (bioF) from Bacillus subtilis subsp. natto.